Consider the following 229-residue polypeptide: Lipoprotein-releasing system ATP-binding protein LolD (229 aa).

Residues 7-229 (LKCKNVTKTY…KNGKLYKKNL (223 aa)) enclose the ABC transporter domain. 43 to 50 (GDSGSGKS) lines the ATP pocket.

The protein belongs to the ABC transporter superfamily. Lipoprotein translocase (TC 3.A.1.125) family. As to quaternary structure, the complex is composed of two ATP-binding proteins (LolD) and two transmembrane proteins (LolC and LolE).

The protein localises to the cell membrane. Its function is as follows. Part of the ABC transporter complex LolCDE involved in the translocation of lipoproteins, in an ATP-dependent manner. This Wigglesworthia glossinidia brevipalpis protein is Lipoprotein-releasing system ATP-binding protein LolD.